A 662-amino-acid polypeptide reads, in one-letter code: Bifunctional polymyxin resistance protein ArnA (662 aa).

The tract at residues 1–307 is formyltransferase ArnAFT; the sequence is MTSKAVVFAY…ELGLVEGARL (307 aa). The Proton donor; for formyltransferase activity role is filled by His106. (6R)-10-formyltetrahydrofolate-binding positions include Arg116 and 138–142; that span reads VERAD. Residues 316–662 form a dehydrogenase ArnADH region; sequence RRTRVLILGV…EALREREAQA (347 aa). NAD(+) is bound by residues Asp349 and 370-371; that span reads DI. Residues Ala395, Tyr400, and 434–435 contribute to the UDP-alpha-D-glucuronate site; that span reads TS. Glu436 (proton acceptor; for decarboxylase activity) is an active-site residue. UDP-alpha-D-glucuronate-binding positions include Arg462, Asn493, 527 to 536, and Tyr614; that span reads RLVDGGAQKR. The active-site Proton donor; for decarboxylase activity is Arg620.

It in the N-terminal section; belongs to the Fmt family. UDP-L-Ara4N formyltransferase subfamily. In the C-terminal section; belongs to the NAD(P)-dependent epimerase/dehydratase family. UDP-glucuronic acid decarboxylase subfamily. As to quaternary structure, homohexamer, formed by a dimer of trimers.

The catalysed reaction is UDP-alpha-D-glucuronate + NAD(+) = UDP-beta-L-threo-pentopyranos-4-ulose + CO2 + NADH. It catalyses the reaction UDP-4-amino-4-deoxy-beta-L-arabinose + (6R)-10-formyltetrahydrofolate = UDP-4-deoxy-4-formamido-beta-L-arabinose + (6S)-5,6,7,8-tetrahydrofolate + H(+). The protein operates within nucleotide-sugar biosynthesis; UDP-4-deoxy-4-formamido-beta-L-arabinose biosynthesis; UDP-4-deoxy-4-formamido-beta-L-arabinose from UDP-alpha-D-glucuronate: step 1/3. Its pathway is nucleotide-sugar biosynthesis; UDP-4-deoxy-4-formamido-beta-L-arabinose biosynthesis; UDP-4-deoxy-4-formamido-beta-L-arabinose from UDP-alpha-D-glucuronate: step 3/3. It functions in the pathway bacterial outer membrane biogenesis; lipopolysaccharide biosynthesis. Bifunctional enzyme that catalyzes the oxidative decarboxylation of UDP-glucuronic acid (UDP-GlcUA) to UDP-4-keto-arabinose (UDP-Ara4O) and the addition of a formyl group to UDP-4-amino-4-deoxy-L-arabinose (UDP-L-Ara4N) to form UDP-L-4-formamido-arabinose (UDP-L-Ara4FN). The modified arabinose is attached to lipid A and is required for resistance to polymyxin and cationic antimicrobial peptides. In Pseudomonas paraeruginosa (strain DSM 24068 / PA7) (Pseudomonas aeruginosa (strain PA7)), this protein is Bifunctional polymyxin resistance protein ArnA.